Here is a 313-residue protein sequence, read N- to C-terminus: MSSREIRIATRQSALALWQAEYVKARLEQAHPGLTVTLLPMTSRGDKLLDAPLAKIGGKGLFVKELETALLEGAADIAVHSMKDVPMDFPEGLGLYTICEREDPRDAFVSNTYASLEQLPAGSVVGTSSLRRQAQLLARRPDLQIRFLRGNVNTRLAKLDAGEYDAIILAAAGLIRLGFESRIRSSISVDDSLPAGGQGAVGIECRTADSDLHALLEPLHHTDTALRVTAERALNKRLNGGCQVPIACYAIREGDQLWLRGLVGQPDGTQLLRAEGRAPLAEAEALGVRVAEDLLEQGAEAILEAVYGEAGHP.

At C242 the chain carries S-(dipyrrolylmethanemethyl)cysteine.

Belongs to the HMBS family. Monomer. Requires dipyrromethane as cofactor.

It carries out the reaction 4 porphobilinogen + H2O = hydroxymethylbilane + 4 NH4(+). The protein operates within porphyrin-containing compound metabolism; protoporphyrin-IX biosynthesis; coproporphyrinogen-III from 5-aminolevulinate: step 2/4. Tetrapolymerization of the monopyrrole PBG into the hydroxymethylbilane pre-uroporphyrinogen in several discrete steps. The sequence is that of Porphobilinogen deaminase from Pseudomonas aeruginosa (strain LESB58).